A 184-amino-acid chain; its full sequence is ATP synthase subunit b, chloroplastic (184 aa).

A helical transmembrane segment spans residues 31–53 (LINLSVVLGVLIYFGKGVLSNLL).

The protein belongs to the ATPase B chain family. As to quaternary structure, F-type ATPases have 2 components, F(1) - the catalytic core - and F(0) - the membrane proton channel. F(1) has five subunits: alpha(3), beta(3), gamma(1), delta(1), epsilon(1). F(0) has four main subunits: a(1), b(1), b'(1) and c(10-14). The alpha and beta chains form an alternating ring which encloses part of the gamma chain. F(1) is attached to F(0) by a central stalk formed by the gamma and epsilon chains, while a peripheral stalk is formed by the delta, b and b' chains.

Its subcellular location is the plastid. It is found in the chloroplast thylakoid membrane. F(1)F(0) ATP synthase produces ATP from ADP in the presence of a proton or sodium gradient. F-type ATPases consist of two structural domains, F(1) containing the extramembraneous catalytic core and F(0) containing the membrane proton channel, linked together by a central stalk and a peripheral stalk. During catalysis, ATP synthesis in the catalytic domain of F(1) is coupled via a rotary mechanism of the central stalk subunits to proton translocation. In terms of biological role, component of the F(0) channel, it forms part of the peripheral stalk, linking F(1) to F(0). The chain is ATP synthase subunit b, chloroplastic from Cycas taitungensis (Prince sago).